Consider the following 714-residue polypeptide: Hormonally up-regulated neu tumor-associated kinase (714 aa).

Positions M1–A15 are enriched in low complexity. A disordered region spans residues M1–A26. One can recognise a Protein kinase domain in the interval L62–L320. ATP-binding positions include L68–V76 and K91. D186 acts as the Proton acceptor in catalysis. Over residues K437–L461 the composition is skewed to basic and acidic residues. 3 disordered regions span residues K437–L471, M518–D552, and A590–R660. Residues L599–L611 are compositionally biased toward low complexity. Residues A623–G635 are compositionally biased toward basic and acidic residues.

The protein belongs to the protein kinase superfamily. CAMK Ser/Thr protein kinase family. SNF1 subfamily.

The enzyme catalyses L-seryl-[protein] + ATP = O-phospho-L-seryl-[protein] + ADP + H(+). It carries out the reaction L-threonyl-[protein] + ATP = O-phospho-L-threonyl-[protein] + ADP + H(+). In Pan troglodytes (Chimpanzee), this protein is Hormonally up-regulated neu tumor-associated kinase (HUNK).